A 361-amino-acid polypeptide reads, in one-letter code: MTQPAFFKQPPPLTLVEIAASTGAQLIDASRGEQRITGLASLDQAGPMHLTFFDNHKYAAQLAATRAGACFVSPRFEASVPGHVAVLRSAAPFRAFVRIARDCHADTLRPQSWFDNATIAASAVVHPSAHLEDAVVVDPLAVIGPGVEIGTGSVIGSGAVIGPGVRIGRNCNVGAGTTIQVALIGNNVLIHPGCHIGQDGYGFIFFGSEGHVKVPQTGRVLIQNDVEIGAGTTIDRGSLRDTVIGEGTKIDNQVQIGHNVTIGRRCLLAAQIGLAGSLTIGDNVALGAKVGINNHLHIGDGAQVVAMSGVKDDIPPNGRWGGYFAKPTRQWYRELFAVERLARDGAPNAGSATPDPTDRGA.

The active-site Proton acceptor is the H258.

It belongs to the transferase hexapeptide repeat family. LpxD subfamily. Homotrimer.

The enzyme catalyses a UDP-3-O-[(3R)-3-hydroxyacyl]-alpha-D-glucosamine + a (3R)-hydroxyacyl-[ACP] = a UDP-2-N,3-O-bis[(3R)-3-hydroxyacyl]-alpha-D-glucosamine + holo-[ACP] + H(+). It functions in the pathway bacterial outer membrane biogenesis; LPS lipid A biosynthesis. Functionally, catalyzes the N-acylation of UDP-3-O-acylglucosamine using 3-hydroxyacyl-ACP as the acyl donor. Is involved in the biosynthesis of lipid A, a phosphorylated glycolipid that anchors the lipopolysaccharide to the outer membrane of the cell. In Nitrobacter hamburgensis (strain DSM 10229 / NCIMB 13809 / X14), this protein is UDP-3-O-acylglucosamine N-acyltransferase.